A 334-amino-acid polypeptide reads, in one-letter code: Tryptophan--tRNA ligase (334 aa).

ATP-binding positions include 11 to 13 (QPS) and 19 to 20 (GN). Residues 12 to 20 (PSGELTIGN) carry the 'HIGH' region motif. Asp135 serves as a coordination point for L-tryptophan. ATP contacts are provided by residues 147 to 149 (GDD), Ile186, and 195 to 199 (KMSKS). The short motif at 195–199 (KMSKS) is the 'KMSKS' region element.

The protein belongs to the class-I aminoacyl-tRNA synthetase family. In terms of assembly, homodimer.

The protein resides in the cytoplasm. It catalyses the reaction tRNA(Trp) + L-tryptophan + ATP = L-tryptophyl-tRNA(Trp) + AMP + diphosphate + H(+). Functionally, catalyzes the attachment of tryptophan to tRNA(Trp). The protein is Tryptophan--tRNA ligase of Haemophilus influenzae (strain ATCC 51907 / DSM 11121 / KW20 / Rd).